Reading from the N-terminus, the 807-residue chain is Potassium transporter 9 (807 aa).

Residues 1-59 (MAERVEASSVPEGENTIEEREVGAMWELEQKLDQPMDEEANKLNNMYREKGLSMLMLLR) are Cytoplasmic-facing. A helical membrane pass occupies residues 60-80 (LSFQSLGIVYGDLGTSPLYVF). At 81–96 (YNTFPDGIDDSEDVIG) the chain is on the extracellular side. Residues 97 to 117 (ALSLIIYSLLLIPLIKYVFIV) traverse the membrane as a helical segment. Over 118 to 185 (CKANDNGQGG…EGKEWRKRAL (68 aa)) the chain is Cytoplasmic. A helical transmembrane segment spans residues 186-206 (LVVVLLGTCMMIGDGILTPAI). Topologically, residues 207–225 (SVLSATGGIKVNNPKMSGD) are extracellular. Residues 226–246 (IVVLVAIVILIGLFSMQHYGT) traverse the membrane as a helical segment. The Cytoplasmic segment spans residues 247–248 (DK). A helical transmembrane segment spans residues 249–269 (VGWLFAPIVLIWFLFIGATGM). Residues 270–299 (YNICKYDTSVLKAFSPTYIYLYFKRRGRDG) are Extracellular-facing. The helical transmembrane segment at 300–320 (WISLGGILLSITGTEALYADI) threads the bilayer. The Cytoplasmic segment spans residues 321–322 (AY). A helical transmembrane segment spans residues 323–343 (FPLLAIQLAFTFFVFPCLLLA). Topologically, residues 344-369 (YCGQAAYLVIHKEHYQDAFYASIPDS) are extracellular. A helical transmembrane segment spans residues 370–390 (VYWPMFIVATGAAIVGSQATI). Topologically, residues 391–417 (SGTYSIVKQAVAHGCFPRVKIVHTSKK) are cytoplasmic. Residues 418-438 (FLGQIYCPDINWILMLGCIAV) traverse the membrane as a helical segment. Topologically, residues 439-454 (TASFKKQSQIGNAYGT) are extracellular. Residues 455–475 (AVVLVMLVTTLLMVLIMLLVW) form a helical membrane-spanning segment. Residues 476–481 (HCHWIL) are Cytoplasmic-facing. A helical transmembrane segment spans residues 482-502 (VLIFTFLSFFVELSYFSAVIF). Residues 503-507 (KIDEG) are Extracellular-facing. Residues 508–528 (GWVPLIIAAISLLVMSVWHYA) form a helical membrane-spanning segment. Residues 529–807 (TVKKYEFEMH…LLNVGQVFYV (279 aa)) lie on the Cytoplasmic side of the membrane.

The protein belongs to the HAK/KUP transporter (TC 2.A.72.3) family.

The protein localises to the cell membrane. In terms of biological role, putative potassium transporter. The chain is Potassium transporter 9 (POT9) from Arabidopsis thaliana (Mouse-ear cress).